Here is a 455-residue protein sequence, read N- to C-terminus: Argininosuccinate lyase (455 aa).

This sequence belongs to the lyase 1 family. Argininosuccinate lyase subfamily.

Its subcellular location is the cytoplasm. It carries out the reaction 2-(N(omega)-L-arginino)succinate = fumarate + L-arginine. Its pathway is amino-acid biosynthesis; L-arginine biosynthesis; L-arginine from L-ornithine and carbamoyl phosphate: step 3/3. This is Argininosuccinate lyase from Shewanella sp. (strain ANA-3).